The sequence spans 113 residues: Carboxysome shell protein CcmK1 (113 aa).

Residues 4–90 enclose the BMC domain; that stretch reads AVGMIETLGF…PHENLEYVLP (87 aa).

This sequence belongs to the bacterial microcompartments protein family. CcmK subfamily. Homohexamer. Interacts preferentially with CcmK2 and CcmK4a rather than itself in vitro.

Its subcellular location is the carboxysome. In terms of biological role, one of the shell proteins of the carboxysome, a polyhedral inclusion where RuBisCO (ribulose bisphosphate carboxylase, rbcL-rbcS) is sequestered. Assembles into hexamers which make sheets that form the facets of the polyhedral carboxysome. The hexamer central pore probably regulates metabolite flux. This Thermosynechococcus vestitus (strain NIES-2133 / IAM M-273 / BP-1) protein is Carboxysome shell protein CcmK1.